Consider the following 124-residue polypeptide: uncharacterized protein (124 aa).

Its subcellular location is the cytoplasm. The protein resides in the nucleus. This is an uncharacterized protein from Schizosaccharomyces pombe (strain 972 / ATCC 24843) (Fission yeast).